A 327-amino-acid chain; its full sequence is Selenate reductase subunit beta (327 aa).

3 consecutive 4Fe-4S ferredoxin-type domains span residues 6–35 (LAYVFDLNKCIGCHTCTMACKQLWTNRDGR), 124–155 (NHYFYLPRICNHCSNPACLAACPTKAIYKREE), and 157–186 (GLVVVDQSRCKGYRYCVKACPYGKMYFNLQ). The [4Fe-4S] cluster site is built by C15, C18, C21, C25, C133, C136, and C141. Residues C145, C166, and C172 each contribute to the [3Fe-4S] cluster site. Residues C176, C193, C196, C208, and C212 each contribute to the [4Fe-4S] cluster site.

As to quaternary structure, heterotrimer of alpha (SerA), beta (SerB) and gamma (SerC) subunits. The cofactor is [3Fe-4S] cluster. It depends on [4Fe-4S] cluster as a cofactor.

Its subcellular location is the periplasm. It carries out the reaction selenite + 2 Fe(III)-[cytochrome c] + H2O = 2 Fe(II)-[cytochrome] + selenate + 2 H(+). Its activity is regulated as follows. Enzyme isolated from cells grown in a tungstate rich environment shows a 20-fold reduction in selenate reductase activity. Component of the selenate reductase, which catalyzes the reduction of selenate to selenite and allows anaerobic growth with selenate as the sole terminal electron acceptor. A c-type di-heme cytochrome of the cytc4 family was shown to donate electrons to the selenate reductase in vitro. SerABC can also use reduced benzyl viologen or reduced methyl viologen as an electron donor. This subunit transfers electrons from SerC to SerA. The reductase is specific for selenate, and cannot reduce nitrate, nitrite, chlorate or sulfate. This Thauera selenatis protein is Selenate reductase subunit beta.